A 569-amino-acid chain; its full sequence is MTEQTDVDVVIVGAGPAGLTLANILGLEGVRVLVVDERDKLIDYPRGVGLDDESLRTFQAIGLVDRVLPHTVPNQILRFFDAKRNLLAEMAPPDARFGWPKRNGFVQPMVDAELFGGLQRFDNVEVRFGHRMHQCTQTTDRVEVEFDGGQASVSARYVVGCDGGRSVTRRLMGVSFDGTTSSTRWLVVDIANDPLGHPNSEVGADPRRPYVSIAIAHGIRRFEFMIHPDETDEEADDPAFVRRMLGQLIPYPERVDMIRHRVYTHHSRIAGSFREGRLMLAGDAAHLMPVWQGQGYNSGIRDAANLGWKLAAVVTGRAGEELLDTYDVERRKHARAMIDLSTMVGRVISPTNRKVAALRDRVIHAASAVPSLKRYVLEMRFKPMPRYQQGAVLHHAHAAPNSPTGTLFIQPRVDTRDTQNALLDDVLGTGFAVVCWSNNLRAVLGEEAFGRWKALGAKFVEVRPMSQLRWPGHDDPDVAVIGDRTGALKAWFDVHTESVLFVRPDRCIAAACIAQRAPEISEGLFAALHLTSGAHLTQGGGTDGEKPDRAVLHVAQPAAESSGTGAGTS.

FAD-binding positions include 8–37 and 273–283; these read DVVIVGAGPAGLTLANILGLEGVRVLVVDE and FREGRLMLAGD.

Belongs to the PheA/TfdB FAD monooxygenase family. It depends on FAD as a cofactor.

It catalyses the reaction 3-(3-hydroxyphenyl)propanoate + NADH + O2 + H(+) = 3-(2,3-dihydroxyphenyl)propanoate + NAD(+) + H2O. The enzyme catalyses (2E)-3-(3-hydroxyphenyl)prop-2-enoate + NADH + O2 + H(+) = (2E)-3-(2,3-dihydroxyphenyl)prop-2-enoate + NAD(+) + H2O. Its pathway is aromatic compound metabolism; 3-phenylpropanoate degradation. Its function is as follows. Catalyzes the insertion of one atom of molecular oxygen into position 2 of the phenyl ring of 3-(3-hydroxyphenyl)propionate (3-HPP) and hydroxycinnamic acid (3HCI). The polypeptide is 3-(3-hydroxy-phenyl)propionate/3-hydroxycinnamic acid hydroxylase (Mycolicibacterium gilvum (strain PYR-GCK) (Mycobacterium gilvum (strain PYR-GCK))).